A 440-amino-acid polypeptide reads, in one-letter code: Probable exopolygalacturonase B (440 aa).

The N-terminal stretch at 1–20 (MRLHFLPLVALCATTASSLA) is a signal peptide. N-linked (GlcNAc...) asparagine glycans are attached at residues Asn65, Asn190, and Asn230. Asp260 (proton donor) is an active-site residue. Cys262 and Cys279 are disulfide-bonded. N-linked (GlcNAc...) asparagine glycans are attached at residues Asn268 and Asn280. The active site involves His283. Residues Asn307, Asn334, and Asn371 are each glycosylated (N-linked (GlcNAc...) asparagine). Cys397 and Cys403 are joined by a disulfide. The N-linked (GlcNAc...) asparagine glycan is linked to Asn412.

The protein belongs to the glycosyl hydrolase 28 family.

It localises to the secreted. It catalyses the reaction [(1-&gt;4)-alpha-D-galacturonosyl](n) + H2O = alpha-D-galacturonate + [(1-&gt;4)-alpha-D-galacturonosyl](n-1). In terms of biological role, specific in hydrolyzing the terminal glycosidic bond of polygalacturonic acid and oligogalacturonates. This Emericella nidulans (strain FGSC A4 / ATCC 38163 / CBS 112.46 / NRRL 194 / M139) (Aspergillus nidulans) protein is Probable exopolygalacturonase B (pgxB).